The following is a 227-amino-acid chain: PKHD-type hydroxylase BamMC406_4714 (227 aa).

Residues 78-178 (KVFPPLFNRY…RVASFFWIQS (101 aa)) form the Fe2OG dioxygenase domain. Positions 96, 98, and 159 each coordinate Fe cation. Arg-169 serves as a coordination point for 2-oxoglutarate.

Requires Fe(2+) as cofactor. L-ascorbate serves as cofactor.

This Burkholderia ambifaria (strain MC40-6) protein is PKHD-type hydroxylase BamMC406_4714.